A 581-amino-acid polypeptide reads, in one-letter code: Chaperonin GroEL 1 (581 aa).

ATP-binding positions include 29-32, 86-90, glycine 413, and aspartate 492; these read TIGP and DGTTT. The interval 522-541 is disordered; that stretch reads PEPEAAGPGGPGADPMGGMG. The segment covering 528-541 has biased composition (gly residues); the sequence is GPGGPGADPMGGMG.

The protein belongs to the chaperonin (HSP60) family. As to quaternary structure, forms a cylinder of 14 subunits composed of two heptameric rings stacked back-to-back. Interacts with the co-chaperonin GroES.

Its subcellular location is the cytoplasm. It carries out the reaction ATP + H2O + a folded polypeptide = ADP + phosphate + an unfolded polypeptide.. Functionally, together with its co-chaperonin GroES, plays an essential role in assisting protein folding. The GroEL-GroES system forms a nano-cage that allows encapsulation of the non-native substrate proteins and provides a physical environment optimized to promote and accelerate protein folding. The sequence is that of Chaperonin GroEL 1 from Prochlorococcus marinus (strain MIT 9301).